The sequence spans 217 residues: Histone H1C (217 aa).

Composition is skewed to low complexity over residues 1–11 (MAETASTETTP) and 28–45 (KKAA…PSAS). 2 disordered regions span residues 1–45 (MAET…PSAS) and 123–217 (VAKK…AAKK). The 74-residue stretch at 40 to 113 (SGPSASELIV…GASGSFKLNK (74 aa)) folds into the H15 domain. Composition is skewed to basic residues over residues 123 to 151 (VAKK…KPKK) and 159 to 217 (SPKK…AAKK).

The protein belongs to the histone H1/H5 family.

It is found in the nucleus. It localises to the chromosome. In terms of biological role, histones H1 are necessary for the condensation of nucleosome chains into higher-order structures. This Xenopus laevis (African clawed frog) protein is Histone H1C.